Consider the following 334-residue polypeptide: TPR repeat-containing protein YsoA (334 aa).

TPR repeat units lie at residues 17-50 (KDRLVEKGMSSLKEKKYQEALELFSEAMKYDDTE), 52-84 (DLHLGMAICFLELGELEEAESVCEKMLKEGYGH), and 195-230 (HPIIKTMIVMLLAEHEYSKPVHISKFGESLTIEPSE).

The sequence is that of TPR repeat-containing protein YsoA (ysoA) from Bacillus subtilis (strain 168).